The chain runs to 363 residues: S-adenosylmethionine:tRNA ribosyltransferase-isomerase (363 aa).

This sequence belongs to the QueA family. Monomer.

The protein resides in the cytoplasm. The enzyme catalyses 7-aminomethyl-7-carbaguanosine(34) in tRNA + S-adenosyl-L-methionine = epoxyqueuosine(34) in tRNA + adenine + L-methionine + 2 H(+). Its pathway is tRNA modification; tRNA-queuosine biosynthesis. In terms of biological role, transfers and isomerizes the ribose moiety from AdoMet to the 7-aminomethyl group of 7-deazaguanine (preQ1-tRNA) to give epoxyqueuosine (oQ-tRNA). The sequence is that of S-adenosylmethionine:tRNA ribosyltransferase-isomerase from Mannheimia succiniciproducens (strain KCTC 0769BP / MBEL55E).